We begin with the raw amino-acid sequence, 216 residues long: Probable glutamine ABC transporter permease protein GlnM (216 aa).

The ABC transmembrane type-1 domain maps to 17-205 (FYHTLLASVI…VLTIPLSIGV (189 aa)). The next 5 helical transmembrane spans lie at 21–41 (LLASVIALAGSFVLGVAVAVM), 63–83 (IPLLLITFVFYFGLPNAGLRL), 85–105 (GFQAGTVALTIYTSAFIAEAI), 132–152 (LHIILPQAIKIVIPPLGNQFL), and 181–201 (LVVFDVYIFVALFYLVLTIPL).

Belongs to the binding-protein-dependent transport system permease family. The complex is composed of two ATP-binding proteins (GlnQ), two transmembrane proteins (GlnM and GlnP) and a solute-binding protein (GlnH).

The protein localises to the cell membrane. Its function is as follows. Part of the ABC transporter complex GlnHMPQ involved in glutamine transport. Probably responsible for the translocation of the substrate across the membrane. The chain is Probable glutamine ABC transporter permease protein GlnM (glnM) from Bacillus subtilis (strain 168).